Consider the following 175-residue polypeptide: GTP-dependent dephospho-CoA kinase (175 aa).

GTP is bound by residues Asp48, Val49, Val50, Asp66, and Glu124.

This sequence belongs to the GTP-dependent DPCK family.

The enzyme catalyses 3'-dephospho-CoA + GTP = GDP + CoA + H(+). It participates in cofactor biosynthesis; coenzyme A biosynthesis. Functionally, catalyzes the GTP-dependent phosphorylation of the 3'-hydroxyl group of dephosphocoenzyme A to form coenzyme A (CoA). This is GTP-dependent dephospho-CoA kinase from Thermofilum pendens (strain DSM 2475 / Hrk 5).